A 662-amino-acid chain; its full sequence is UvrABC system protein B (662 aa).

The region spanning 25–412 (EGVRRGYRYQ…SEQVVEQLIR (388 aa)) is the Helicase ATP-binding domain. 38–45 (GVTGSGKT) lines the ATP pocket. The Beta-hairpin motif lies at 91–114 (YYDYYQPEAYVPETDTYIEKDASI). The region spanning 429–595 (QVDDLIAEIR…TVVKGVRDVI (167 aa)) is the Helicase C-terminal domain. In terms of domain architecture, UVR spans 620–655 (KSTIEQLEKEMRQAAIELQFEKAAKLRDMILELRKQ).

This sequence belongs to the UvrB family. As to quaternary structure, forms a heterotetramer with UvrA during the search for lesions. Interacts with UvrC in an incision complex.

It is found in the cytoplasm. Functionally, the UvrABC repair system catalyzes the recognition and processing of DNA lesions. A damage recognition complex composed of 2 UvrA and 2 UvrB subunits scans DNA for abnormalities. Upon binding of the UvrA(2)B(2) complex to a putative damaged site, the DNA wraps around one UvrB monomer. DNA wrap is dependent on ATP binding by UvrB and probably causes local melting of the DNA helix, facilitating insertion of UvrB beta-hairpin between the DNA strands. Then UvrB probes one DNA strand for the presence of a lesion. If a lesion is found the UvrA subunits dissociate and the UvrB-DNA preincision complex is formed. This complex is subsequently bound by UvrC and the second UvrB is released. If no lesion is found, the DNA wraps around the other UvrB subunit that will check the other stand for damage. The chain is UvrABC system protein B from Caldanaerobacter subterraneus subsp. tengcongensis (strain DSM 15242 / JCM 11007 / NBRC 100824 / MB4) (Thermoanaerobacter tengcongensis).